The chain runs to 1433 residues: DNA-directed RNA polymerase subunit beta' (1433 aa).

Residues Cys60, Cys62, Cys75, and Cys78 each contribute to the Zn(2+) site. The Mg(2+) site is built by Asp449, Asp451, and Asp453. Residues Cys777, Cys851, Cys858, and Cys861 each coordinate Zn(2+). Composition is skewed to acidic residues over residues 1383–1393 and 1411–1433; these read DSEEEEEELSE and EEDE…DDDD. The tract at residues 1383-1433 is disordered; sequence DSEEEEEELSELSEAAPVSTATLSKLVAEEDEDEDELEEEADDSDDEDDDD.

This sequence belongs to the RNA polymerase beta' chain family. As to quaternary structure, the RNAP catalytic core consists of 2 alpha, 1 beta, 1 beta' and 1 omega subunit. When a sigma factor is associated with the core the holoenzyme is formed, which can initiate transcription. Mg(2+) is required as a cofactor. It depends on Zn(2+) as a cofactor.

It carries out the reaction RNA(n) + a ribonucleoside 5'-triphosphate = RNA(n+1) + diphosphate. Functionally, DNA-dependent RNA polymerase catalyzes the transcription of DNA into RNA using the four ribonucleoside triphosphates as substrates. The chain is DNA-directed RNA polymerase subunit beta' from Leptospira biflexa serovar Patoc (strain Patoc 1 / Ames).